The primary structure comprises 477 residues: 3-isopropylmalate dehydratase large subunit (477 aa).

3 residues coordinate [4Fe-4S] cluster: cysteine 352, cysteine 413, and cysteine 416.

It belongs to the aconitase/IPM isomerase family. LeuC type 1 subfamily. As to quaternary structure, heterodimer of LeuC and LeuD. It depends on [4Fe-4S] cluster as a cofactor.

It carries out the reaction (2R,3S)-3-isopropylmalate = (2S)-2-isopropylmalate. It participates in amino-acid biosynthesis; L-leucine biosynthesis; L-leucine from 3-methyl-2-oxobutanoate: step 2/4. Its function is as follows. Catalyzes the isomerization between 2-isopropylmalate and 3-isopropylmalate, via the formation of 2-isopropylmaleate. The polypeptide is 3-isopropylmalate dehydratase large subunit (Pseudomonas putida (strain W619)).